The primary structure comprises 382 residues: Cholinephosphotransferase 1 (382 aa).

Residues 1–51 (MPQCECPEPLSAVQLKRLEEHKYSAAGRSLFEPPCQIYWNWLVQQIPTWVA) lie on the Cytoplasmic side of the membrane. Residues 52–72 (PNTLTTIGLVINVITTVILVY) traverse the membrane as a helical segment. Asn-53 lines the CDP-choline pocket. Over 73–82 (YSPTATEEVP) the chain is Lumenal. The helical transmembrane segment at 83–107 (GWAFFLSALGLFIYQSLDAIDGKQA) threads the bilayer. Asp-100 and Asp-103 together coordinate Mg(2+). Arg-108 contacts CDP-choline. Residues 108–114 (RRTNSSS) lie on the Cytoplasmic side of the membrane. A helical transmembrane segment spans residues 115–139 (ALGELFDHGCDAVSTVFVAVGTCIC). Asp-121 contributes to the Mg(2+) binding site. The active-site Proton acceptor is His-122. A Mg(2+)-binding site is contributed by Asp-125. The Lumenal segment spans residues 140 to 149 (CGIGAYPNWM). A helical transmembrane segment spans residues 150-168 (FFCGFVGMFMFFCAHWQTY). The Cytoplasmic portion of the chain corresponds to 169–179 (VSGTLRFGLVD). A helical membrane pass occupies residues 180–196 (VTEVQIAIIIMYLLTAF). Residues 197-211 (TGVSFWEMRVPVLGV) lie on the Lumenal side of the membrane. Residues 212-237 (NLQTFPILGIIGGFLYSTYNYFFVIM) traverse the membrane as a helical segment. Residues 238–254 (NGGVGKNGSTVADTSVL) are Cytoplasmic-facing. A helical transmembrane segment spans residues 255–270 (TPGLHIGLILTLAFII). At 271-282 (FKKSSSHLFEHH) the chain is on the lumenal side. Residues 283–305 (PCLYVLTFGMVIAKISNKLVVAH) traverse the membrane as a helical segment. The Cytoplasmic segment spans residues 306 to 318 (MTKSELHLQDTAF). A helical transmembrane segment spans residues 319 to 328 (IGPGLLFLNQ). The Lumenal portion of the chain corresponds to 329–335 (YFNSYID). The chain crosses the membrane as a helical span at residues 336–365 (EHIVLWIAMVLSLVDLVRYCTAVCLQIASH). The Cytoplasmic segment spans residues 366-382 (LRIRVFSISPQGHAHKD).

The protein belongs to the CDP-alcohol phosphatidyltransferase class-I family. It depends on Mg(2+) as a cofactor. Requires Mn(2+) as cofactor.

It is found in the golgi apparatus membrane. The enzyme catalyses CDP-choline + a 1,2-diacyl-sn-glycerol = a 1,2-diacyl-sn-glycero-3-phosphocholine + CMP + H(+). The catalysed reaction is 1-octadecanoyl-2-(5Z,8Z,11Z,14Z-eicosatetraenoyl)-sn-glycerol + CDP-choline = 1-octadecanoyl-2-(5Z,8Z,11Z,14Z-eicosatetraenoyl)-sn-glycero-3-phosphocholine + CMP + H(+). It carries out the reaction 1-hexadecanoyl-2-(9Z-octadecenoyl)-sn-glycerol + CDP-choline = 1-hexadecanoyl-2-(9Z-octadecenoyl)-sn-glycero-3-phosphocholine + CMP + H(+). It catalyses the reaction 1-hexadecanoyl-2-(4Z,7Z,10Z,13Z,16Z,19Z-docosahexaenoyl)-sn-glycerol + CDP-choline = 1-hexadecanoyl-2-(4Z,7Z,10Z,13Z,16Z,19Z-docosahexaenoyl)-sn-glycero-3-phosphocholine + CMP + H(+). The enzyme catalyses 1,2-dioctanoyl-sn-glycerol + CDP-choline = 1,2-dioctanoyl-sn-glycero-3-phosphocholine + CMP + H(+). The protein operates within phospholipid metabolism; phosphatidylcholine biosynthesis; phosphatidylcholine from phosphocholine: step 2/2. Catalyzes the final step of de novo phosphatidylcholine (PC) synthesis, i.e. the transfer of choline phosphate from CDP-choline to the free hydroxyl of a diacylglycerol (DAG), producing a PC. It thereby plays a central role in the formation and maintenance of vesicular membranes. In Danio rerio (Zebrafish), this protein is Cholinephosphotransferase 1 (chpt1).